We begin with the raw amino-acid sequence, 472 residues long: uncharacterized protein (472 aa).

Low complexity-rich tracts occupy residues 1 to 21 (MAFSSSSLRRSLKLGRGSRPG) and 63 to 74 (ASSLPAPASSSP). The tract at residues 1–74 (MAFSSSSLRR…SLPAPASSSP (74 aa)) is disordered.

This is an uncharacterized protein from Equus caballus (Horse).